The chain runs to 105 residues: Cell division protein FtsB (105 aa).

Over 1 to 3 (MGK) the chain is Cytoplasmic. The chain crosses the membrane as a helical span at residues 4 to 21 (LTLLLLALLVWLQYSLWF). Topologically, residues 22–105 (GKNGLHDYTR…QASGQQQNNR (84 aa)) are periplasmic. The stretch at 33 to 62 (NDDVTAQQATNAKLKARNDQLFAEIDDLNG) forms a coiled coil.

This sequence belongs to the FtsB family. As to quaternary structure, part of a complex composed of FtsB, FtsL and FtsQ.

It localises to the cell inner membrane. Functionally, essential cell division protein. May link together the upstream cell division proteins, which are predominantly cytoplasmic, with the downstream cell division proteins, which are predominantly periplasmic. The sequence is that of Cell division protein FtsB from Klebsiella aerogenes (Enterobacter aerogenes).